Consider the following 148-residue polypeptide: MRLTTKGRFAVTAMLDLAMNAQTGAVKLSAISERQNISLSYLEQLFGKLRRAGLVESLRGPGGGYILAAPAARINIAQIIAAAEDRLDATQCGSKANCHHGAPCLTHDLWENLNKTINDYLGSVTLQSIIEQKNNGDGSRVVQFTHIH.

The HTH rrf2-type domain occupies 2–131 (RLTTKGRFAV…GSVTLQSIIE (130 aa)).

The sequence is that of Putative HTH-type transcriptional regulator NMA1593 from Neisseria meningitidis serogroup A / serotype 4A (strain DSM 15465 / Z2491).